The sequence spans 479 residues: Aspartyl/glutamyl-tRNA(Asn/Gln) amidotransferase subunit B (479 aa).

This sequence belongs to the GatB/GatE family. GatB subfamily. Heterotrimer of A, B and C subunits.

It carries out the reaction L-glutamyl-tRNA(Gln) + L-glutamine + ATP + H2O = L-glutaminyl-tRNA(Gln) + L-glutamate + ADP + phosphate + H(+). It catalyses the reaction L-aspartyl-tRNA(Asn) + L-glutamine + ATP + H2O = L-asparaginyl-tRNA(Asn) + L-glutamate + ADP + phosphate + 2 H(+). Allows the formation of correctly charged Asn-tRNA(Asn) or Gln-tRNA(Gln) through the transamidation of misacylated Asp-tRNA(Asn) or Glu-tRNA(Gln) in organisms which lack either or both of asparaginyl-tRNA or glutaminyl-tRNA synthetases. The reaction takes place in the presence of glutamine and ATP through an activated phospho-Asp-tRNA(Asn) or phospho-Glu-tRNA(Gln). The protein is Aspartyl/glutamyl-tRNA(Asn/Gln) amidotransferase subunit B of Deinococcus radiodurans (strain ATCC 13939 / DSM 20539 / JCM 16871 / CCUG 27074 / LMG 4051 / NBRC 15346 / NCIMB 9279 / VKM B-1422 / R1).